A 369-amino-acid polypeptide reads, in one-letter code: 4-hydroxyproline betaine 2-epimerase (369 aa).

Substrate-binding residues include Y56 and Q162. The active-site Proton donor/acceptor is K164. Mg(2+) is bound by residues D194, E219, and D242. K266 functions as the Proton donor/acceptor in the catalytic mechanism. A295 provides a ligand contact to substrate.

Belongs to the mandelate racemase/muconate lactonizing enzyme family. It depends on Mg(2+) as a cofactor.

It catalyses the reaction trans-4-hydroxy-L-proline betaine = cis-4-hydroxy-D-proline betaine. The enzyme catalyses L-proline betaine = D-proline betaine. Functionally, catalyzes the 2-epimerization of trans-4-hydroxy-L-proline betaine (tHyp-B) to cis-4-hydroxy-D-proline betaine (cHyp-B). Is involved in a catabolic pathway that degrades tHyp-B to alpha-ketoglutarate. This pathway would permit the utilization of tHyp-B as a carbon and nitrogen source in the absence of osmotic stress, since tHyp-B functions as an osmolyte and is not catabolized when it is needed as osmoprotectant. Can also catalyze the racemization of L-proline betaine. The chain is 4-hydroxyproline betaine 2-epimerase (hpbD) from Paracoccus denitrificans (strain Pd 1222).